The chain runs to 304 residues: Acetylxylan esterase A (304 aa).

Residues 1 to 19 (MVKLQYLLSILLYAYSCTA) form the signal peptide. The Charge relay system role is filled by serine 147. N-linked (GlcNAc...) asparagine glycosylation is present at asparagine 189.

Belongs to the carbohydrate esterase 1 (CE1) family. AxeA subfamily. Monomer.

The protein resides in the secreted. The enzyme catalyses Deacetylation of xylans and xylo-oligosaccharides.. The protein operates within glycan degradation; xylan degradation. In terms of biological role, acetylxylan esterase involved in the hydrolysis of xylan, a major structural heterogeneous polysaccharide found in plant biomass representing the second most abundant polysaccharide in the biosphere, after cellulose. Degrades acetylated xylans by cleaving acetyl side groups from the hetero-xylan backbone. The protein is Acetylxylan esterase A (axeA) of Emericella nidulans (strain FGSC A4 / ATCC 38163 / CBS 112.46 / NRRL 194 / M139) (Aspergillus nidulans).